The sequence spans 351 residues: Histidinol-phosphate aminotransferase (351 aa).

At lysine 221 the chain carries N6-(pyridoxal phosphate)lysine.

Belongs to the class-II pyridoxal-phosphate-dependent aminotransferase family. Histidinol-phosphate aminotransferase subfamily. Homodimer. The cofactor is pyridoxal 5'-phosphate.

It catalyses the reaction L-histidinol phosphate + 2-oxoglutarate = 3-(imidazol-4-yl)-2-oxopropyl phosphate + L-glutamate. The protein operates within amino-acid biosynthesis; L-histidine biosynthesis; L-histidine from 5-phospho-alpha-D-ribose 1-diphosphate: step 7/9. The sequence is that of Histidinol-phosphate aminotransferase from Staphylococcus haemolyticus (strain JCSC1435).